A 555-amino-acid polypeptide reads, in one-letter code: Dihydroxy-acid dehydratase (555 aa).

D78 provides a ligand contact to Mg(2+). C119 lines the [2Fe-2S] cluster pocket. Residues D120 and K121 each coordinate Mg(2+). K121 carries the N6-carboxylysine modification. C191 lines the [2Fe-2S] cluster pocket. A Mg(2+)-binding site is contributed by E444. The Proton acceptor role is filled by S470.

This sequence belongs to the IlvD/Edd family. In terms of assembly, homodimer. [2Fe-2S] cluster serves as cofactor. It depends on Mg(2+) as a cofactor.

It catalyses the reaction (2R)-2,3-dihydroxy-3-methylbutanoate = 3-methyl-2-oxobutanoate + H2O. It carries out the reaction (2R,3R)-2,3-dihydroxy-3-methylpentanoate = (S)-3-methyl-2-oxopentanoate + H2O. It functions in the pathway amino-acid biosynthesis; L-isoleucine biosynthesis; L-isoleucine from 2-oxobutanoate: step 3/4. The protein operates within amino-acid biosynthesis; L-valine biosynthesis; L-valine from pyruvate: step 3/4. Functionally, functions in the biosynthesis of branched-chain amino acids. Catalyzes the dehydration of (2R,3R)-2,3-dihydroxy-3-methylpentanoate (2,3-dihydroxy-3-methylvalerate) into 2-oxo-3-methylpentanoate (2-oxo-3-methylvalerate) and of (2R)-2,3-dihydroxy-3-methylbutanoate (2,3-dihydroxyisovalerate) into 2-oxo-3-methylbutanoate (2-oxoisovalerate), the penultimate precursor to L-isoleucine and L-valine, respectively. In Oleidesulfovibrio alaskensis (strain ATCC BAA-1058 / DSM 17464 / G20) (Desulfovibrio alaskensis), this protein is Dihydroxy-acid dehydratase.